The sequence spans 327 residues: Methionine import ATP-binding protein MetN (327 aa).

The ABC transporter domain maps to 3–239; the sequence is VELKNIEKIY…PKHAVTKELL (237 aa). 36–43 is a binding site for ATP; that stretch reads GYSGAGKS.

The protein belongs to the ABC transporter superfamily. Methionine importer (TC 3.A.1.24) family. As to quaternary structure, the complex is composed of two ATP-binding proteins (MetN), two transmembrane proteins (MetI) and a solute-binding protein (MetQ).

It localises to the cell inner membrane. The enzyme catalyses L-methionine(out) + ATP + H2O = L-methionine(in) + ADP + phosphate + H(+). It carries out the reaction D-methionine(out) + ATP + H2O = D-methionine(in) + ADP + phosphate + H(+). In terms of biological role, part of the ABC transporter complex MetNIQ involved in methionine import. Responsible for energy coupling to the transport system. The chain is Methionine import ATP-binding protein MetN from Helicobacter pylori (strain J99 / ATCC 700824) (Campylobacter pylori J99).